Consider the following 23-residue polypeptide: Aurein-4.4 (23 aa).

It belongs to the frog skin active peptide (FSAP) family. Aurein subfamily. Expressed by the skin dorsal glands.

The protein localises to the secreted. Has no antimicrobial or anticancer activity. This is Aurein-4.4 from Ranoidea aurea (Green and golden bell frog).